The sequence spans 344 residues: 4-dimethylallyltryptophan N-methyltransferase easF (344 aa).

This sequence belongs to the methyltransferase superfamily. Homodimer.

It carries out the reaction 4-(3-methylbut-2-enyl)-L-tryptophan + S-adenosyl-L-methionine = 4-(3-methylbut-2-enyl)-L-abrine + S-adenosyl-L-homocysteine + H(+). It participates in alkaloid biosynthesis; ergot alkaloid biosynthesis. In terms of biological role, 4-dimethylallyltryptophan N-methyltransferase; part of the gene cluster that mediates the biosynthesis of fungal ergot alkaloid. DmaW catalyzes the first step of ergot alkaloid biosynthesis by condensing dimethylallyl diphosphate (DMAP) and tryptophan to form 4-dimethylallyl-L-tryptophan. The second step is catalyzed by the methyltransferase easF that methylates 4-dimethylallyl-L-tryptophan in the presence of S-adenosyl-L-methionine, resulting in the formation of 4-dimethylallyl-L-abrine. The catalase easC and the FAD-dependent oxidoreductase easE then transform 4-dimethylallyl-L-abrine to chanoclavine-I which is further oxidized by easD in the presence of NAD(+), resulting in the formation of chanoclavine-I aldehyde. Agroclavine dehydrogenase easG then mediates the conversion of chanoclavine-I aldehyde to agroclavine via a non-enzymatic adduct reaction: the substrate is an iminium intermediate that is formed spontaneously from chanoclavine-I aldehyde in the presence of glutathione. The presence of easA is not required to complete this reaction. Further conversion of agroclavine to paspalic acid is a two-step process involving oxidation of agroclavine to elymoclavine and of elymoclavine to paspalic acid, the second step being performed by the elymoclavine oxidase cloA. Paspalic acid is then further converted to D-lysergic acid. Ergopeptines are assembled from D-lysergic acid and three different amino acids by the D-lysergyl-peptide-synthetases composed each of a monomudular and a trimodular nonribosomal peptide synthetase subunit. LpsB and lpsC encode the monomodular subunits responsible for D-lysergic acid activation and incorporation into the ergopeptine backbone. LpsA1 and A2 subunits encode the trimodular nonribosomal peptide synthetase assembling the tripeptide portion of ergopeptines. LpsA1 is responsible for formation of the major ergopeptine, ergotamine, and lpsA2 for alpha-ergocryptine, the minor ergopeptine of the total alkaloid mixture elaborated by C.purpurea. D-lysergyl-tripeptides are assembled by the nonribosomal peptide synthetases and released as N-(D-lysergyl-aminoacyl)-lactams. Cyclolization of the D-lysergyl-tripeptides is performed by the Fe(2+)/2-ketoglutarate-dependent dioxygenase easH which introduces a hydroxyl group into N-(D-lysergyl-aminoacyl)-lactam at alpha-C of the aminoacyl residue followed by spontaneous condensation with the terminal lactam carbonyl group. In Claviceps purpurea (strain 20.1) (Ergot fungus), this protein is 4-dimethylallyltryptophan N-methyltransferase easF.